Here is a 1165-residue protein sequence, read N- to C-terminus: Vacuolar segregation protein 7 (1165 aa).

The Cytoplasmic portion of the chain corresponds to 1-919 (MTEEDRKLTV…RKSPFVKVKN (919 aa)). The interval 118–147 (SVSSTNNNSNNALINHNPLSSHLSNPSSSL) is disordered. Residue serine 164 is modified to Phosphoserine. Disordered regions lie at residues 215–241 (SNNT…LPSL), 274–423 (KAKN…SEKP), 461–497 (LIFP…SAPL), and 560–668 (EPPH…KRPL). Polar residues predominate over residues 216–230 (NNTAPSTSNNIGSNT). Low complexity predominate over residues 334-345 (TTSTKTAPSTAP). Residues 346–367 (LGSTDNTQALTASVSSSNADNH) are compositionally biased toward polar residues. Residues 375-391 (SSNNNGNNSNSASNKTN) show a composition bias toward low complexity. The segment covering 393–412 (DIKNSNADLSASTSNNNAIN) has biased composition (polar residues). Positions 413 to 423 (DDSHESNSEKP) are enriched in basic and acidic residues. 2 stretches are compositionally biased toward low complexity: residues 469–485 (QQQQ…QQQQ) and 562–571 (PHQLQQQQPP). A compositionally biased stretch (polar residues) spans 576 to 587 (SVDSYTSDNPDS). Over residues 599–613 (SLVSLSKVSPHLLSS) the composition is skewed to low complexity. Over residues 614–662 (TSSNGNTISCPNVATNSQELEPNNDISTKKSLSNSTLRHSSANRNSNYG) the composition is skewed to polar residues. The helical; Signal-anchor for type II membrane protein transmembrane segment at 920 to 940 (FLYLAFVISSLLMTGFILGFL) threads the bilayer. The Vacuolar portion of the chain corresponds to 941 to 1165 (LATNKELQDV…KDSMVHPGKK (225 aa)). Asparagine 1020 and asparagine 1099 each carry an N-linked (GlcNAc...) asparagine glycan. Residues 1074–1121 (SPGSREAKHENDDDDDDDGDDGDDENNTNERQYKSKPNARDDKEDDTK) are disordered. Residues 1085-1100 (DDDDDDDGDDGDDENN) are compositionally biased toward acidic residues. A compositionally biased stretch (basic and acidic residues) spans 1111 to 1121 (NARDDKEDDTK).

As to quaternary structure, component of the PI(3,5)P2 regulatory complex, composed of ATG18, FIG4, FAB1, VAC14 and VAC7. VAC14 nucleates the assembly of the complex and serves as a scaffold. N-glycosylated.

It is found in the vacuole membrane. Its function is as follows. The PI(3,5)P2 regulatory complex regulates both the synthesis and turnover of phosphatidylinositol 3,5-bisphosphate (PtdIns(3,5)P2). Positively regulates FAB1 kinase activity. Major activator of FAB1 during hyperosmotic shock and can elevate levels of PtdIns(3,5)P2 in the absence of VAC14 and FIG4. Directly involved in vacuolar membrane scission. Required for normal vacuole acidification, inheritance and morphology. The protein is Vacuolar segregation protein 7 (VAC7) of Saccharomyces cerevisiae (strain ATCC 204508 / S288c) (Baker's yeast).